We begin with the raw amino-acid sequence, 203 residues long: Small ribosomal subunit protein uS4 (203 aa).

The segment at 15–46 is disordered; the sequence is LGENIWGRPKSSVNRRSYGPGQHGQRRKSKVS. One can recognise an S4 RNA-binding domain in the interval 94–154; that stretch reads QRLDMVVYRA…KKAKEMALIA (61 aa).

Belongs to the universal ribosomal protein uS4 family. Part of the 30S ribosomal subunit. Contacts protein S5. The interaction surface between S4 and S5 is involved in control of translational fidelity.

In terms of biological role, one of the primary rRNA binding proteins, it binds directly to 16S rRNA where it nucleates assembly of the body of the 30S subunit. With S5 and S12 plays an important role in translational accuracy. In Novosphingobium aromaticivorans (strain ATCC 700278 / DSM 12444 / CCUG 56034 / CIP 105152 / NBRC 16084 / F199), this protein is Small ribosomal subunit protein uS4.